A 155-amino-acid polypeptide reads, in one-letter code: SsrA-binding protein (155 aa).

Belongs to the SmpB family.

It is found in the cytoplasm. Functionally, required for rescue of stalled ribosomes mediated by trans-translation. Binds to transfer-messenger RNA (tmRNA), required for stable association of tmRNA with ribosomes. tmRNA and SmpB together mimic tRNA shape, replacing the anticodon stem-loop with SmpB. tmRNA is encoded by the ssrA gene; the 2 termini fold to resemble tRNA(Ala) and it encodes a 'tag peptide', a short internal open reading frame. During trans-translation Ala-aminoacylated tmRNA acts like a tRNA, entering the A-site of stalled ribosomes, displacing the stalled mRNA. The ribosome then switches to translate the ORF on the tmRNA; the nascent peptide is terminated with the 'tag peptide' encoded by the tmRNA and targeted for degradation. The ribosome is freed to recommence translation, which seems to be the essential function of trans-translation. This chain is SsrA-binding protein, found in Bacillus cytotoxicus (strain DSM 22905 / CIP 110041 / 391-98 / NVH 391-98).